Consider the following 512-residue polypeptide: Kynurenine 3-monooxygenase (512 aa).

It belongs to the aromatic-ring hydroxylase family. KMO subfamily. FAD serves as cofactor.

The protein localises to the mitochondrion outer membrane. It carries out the reaction L-kynurenine + NADPH + O2 + H(+) = 3-hydroxy-L-kynurenine + NADP(+) + H2O. Its pathway is cofactor biosynthesis; NAD(+) biosynthesis; quinolinate from L-kynurenine: step 1/3. Its function is as follows. Catalyzes the hydroxylation of L-kynurenine (L-Kyn) to form 3-hydroxy-L-kynurenine (L-3OHKyn). Required for synthesis of quinolinic acid. In Aspergillus clavatus (strain ATCC 1007 / CBS 513.65 / DSM 816 / NCTC 3887 / NRRL 1 / QM 1276 / 107), this protein is Kynurenine 3-monooxygenase (bna4).